Here is a 110-residue protein sequence, read N- to C-terminus: UPF0060 membrane protein Psyr_3752 (110 aa).

A run of 4 helical transmembrane segments spans residues 5–25 (LWFF…WLWL), 28–48 (GKSA…ALLL), 59–79 (AYAA…GLVE), and 84–104 (LGTD…ILLG).

Belongs to the UPF0060 family.

It localises to the cell inner membrane. This chain is UPF0060 membrane protein Psyr_3752, found in Pseudomonas syringae pv. syringae (strain B728a).